The following is a 290-amino-acid chain: Prepilin leader peptidase/N-methyltransferase (290 aa).

Residues Ala13–Val33 form a helical membrane-spanning segment. Zn(2+)-binding residues include Cys72, Cys75, Cys97, and Cys100. 5 helical membrane passes run Phe128 to Ile148, Val158 to Ser178, Leu183 to Val203, Ile228 to Leu248, and Phe261 to Gly276.

It belongs to the peptidase A24 family. Zn(2+) serves as cofactor.

Its subcellular location is the cell inner membrane. The enzyme catalyses Typically cleaves a -Gly-|-Phe- bond to release an N-terminal, basic peptide of 5-8 residues from type IV prepilin, and then N-methylates the new N-terminal amino group, the methyl donor being S-adenosyl-L-methionine.. Functionally, plays an essential role in type IV pili and type II pseudopili formation by proteolytically removing the leader sequence from substrate proteins and subsequently monomethylating the alpha-amino group of the newly exposed N-terminal phenylalanine. Substrates include proteins required for pilus biogenesis PilE, PilV, PilW, and PilX as well as some components of the type II general secretory apparatus GspG, GspH, GspI and GspJ. This is Prepilin leader peptidase/N-methyltransferase (pilD) from Pseudomonas aeruginosa (strain ATCC 15692 / DSM 22644 / CIP 104116 / JCM 14847 / LMG 12228 / 1C / PRS 101 / PAO1).